Here is a 323-residue protein sequence, read N- to C-terminus: NADH-cytochrome b5 reductase 2 (323 aa).

The chain crosses the membrane as a helical span at residues 32–48; that stretch reads LAPIYVAVGLTGLGVGL. In terms of domain architecture, FAD-binding FR-type spans 72–177; it reads QGWVDLKLAQ…KGPIPKYPWE (106 aa). 180 to 215 provides a ligand contact to FAD; sequence KHKHICLIAGGTGITPMYQLARKIFKDPEDQTKVTL.

The protein belongs to the flavoprotein pyridine nucleotide cytochrome reductase family. It depends on FAD as a cofactor.

The protein localises to the mitochondrion outer membrane. The catalysed reaction is 2 Fe(III)-[cytochrome b5] + NADH = 2 Fe(II)-[cytochrome b5] + NAD(+) + H(+). In terms of biological role, may mediate the reduction of outer membrane cytochrome b5. This chain is NADH-cytochrome b5 reductase 2 (mcr1), found in Neosartorya fischeri (strain ATCC 1020 / DSM 3700 / CBS 544.65 / FGSC A1164 / JCM 1740 / NRRL 181 / WB 181) (Aspergillus fischerianus).